We begin with the raw amino-acid sequence, 432 residues long: Glutamate-1-semialdehyde 2,1-aminomutase (432 aa).

Position 265 is an N6-(pyridoxal phosphate)lysine (Lys265).

Belongs to the class-III pyridoxal-phosphate-dependent aminotransferase family. HemL subfamily. As to quaternary structure, homodimer. Requires pyridoxal 5'-phosphate as cofactor.

It is found in the cytoplasm. It catalyses the reaction (S)-4-amino-5-oxopentanoate = 5-aminolevulinate. The protein operates within porphyrin-containing compound metabolism; protoporphyrin-IX biosynthesis; 5-aminolevulinate from L-glutamyl-tRNA(Glu): step 2/2. This is Glutamate-1-semialdehyde 2,1-aminomutase from Histophilus somni (strain 2336) (Haemophilus somnus).